The primary structure comprises 300 residues: MESKVIWSDVLRSWLPKANIFVRMFVNHCQRDGITVSAGHLAYVSLLSLVPFIMVFFTILSAFPAFSEVRGDIEALIFGNFIPTSGDQIQGYVAEFVGNASKMGAIGILSLVVVALLLISNIDKTLNRIWQAKSERPIIFTFAIYWMILTLGPLLIGLSVIMSSYLVAFANSAEAYTMGATTAMLKIVPFIASVCAFFILYMIVPNKRINPRHALVGAFMGALLFELSKKGFSFYITHFPSYQMIYGAMAVIPILFVWVYLSWIVVLLGAELTHVIEVFFHEESKENFTQVDEDDPQSPA.

6 helical membrane-spanning segments follow: residues 46–66, 103–123, 138–158, 184–204, 214–234, and 248–268; these read LLSL…FPAF, MGAI…SNID, IIFT…LIGL, MLKI…YMIV, ALVG…GFSF, and AMAV…VVLL.

Belongs to the UPF0761 family.

The protein resides in the cell inner membrane. The sequence is that of UPF0761 membrane protein Patl_3954 from Pseudoalteromonas atlantica (strain T6c / ATCC BAA-1087).